The following is a 337-amino-acid chain: MGQYLTKTEESSLNYVDLPDTVHRKIFEYLNPWEIFKLSRISKAIHVTILKNKKFAVKDIDLCTDENILKFQFQFVNNIVLSWEFYNLHEKPYFTSQFSNRCQYRQQYDIKNYYENPEEAFLFAFRNALSIFNVQNSKLKRFYLAPSKLELFFKLPYSFIDGRNCENLSIWNKKANDEDERDFSINFAKAVLEKMGVVRNLRLLFNCSTKDNEFDCEKEYYNSETDKLMPNDWYLYNKFDDIDLNVFLKNWLNFRDPLIRKFRIRGKRNFNTAIIFDGIETIPWDQRNGLNVYYYSATANDTGSLIFQANENHAIVKVGAINGNESSGYMEFLFITF.

An F-box domain is found at 12–60 (SLNYVDLPDTVHRKIFEYLNPWEIFKLSRISKAIHVTILKNKKFAVKDI).

This is an uncharacterized protein from Caenorhabditis elegans.